The primary structure comprises 187 residues: Threonylcarbamoyl-AMP synthase (187 aa).

A YrdC-like domain is found at 3 to 187; sequence EVLPADVAEL…AKSGQVIRKG (185 aa).

This sequence belongs to the SUA5 family. TsaC subfamily.

It is found in the cytoplasm. The catalysed reaction is L-threonine + hydrogencarbonate + ATP = L-threonylcarbamoyladenylate + diphosphate + H2O. Its function is as follows. Required for the formation of a threonylcarbamoyl group on adenosine at position 37 (t(6)A37) in tRNAs that read codons beginning with adenine. Catalyzes the conversion of L-threonine, HCO(3)(-)/CO(2) and ATP to give threonylcarbamoyl-AMP (TC-AMP) as the acyladenylate intermediate, with the release of diphosphate. In Shewanella halifaxensis (strain HAW-EB4), this protein is Threonylcarbamoyl-AMP synthase.